We begin with the raw amino-acid sequence, 424 residues long: Cyclin-dependent kinase D-1 (424 aa).

One can recognise a Protein kinase domain in the interval 19-299; it reads YLKREVLGEG…AQQALEHRYF (281 aa). ATP is bound by residues 25–33 and lysine 48; that span reads LGEGTYGVV. Phosphothreonine is present on threonine 29. Tyrosine 30 carries the phosphotyrosine modification. Aspartate 141 serves as the catalytic Proton acceptor. Serine 168 carries the phosphoserine modification. Residue threonine 174 is modified to Phosphothreonine. Disordered regions lie at residues 303 to 337 and 359 to 424; these read PAPT…PVVL and ADRT…GYTE. The segment covering 359–374 has biased composition (basic and acidic residues); that stretch reads ADRTEEHPSGARHMDD.

The protein belongs to the protein kinase superfamily. CMGC Ser/Thr protein kinase family. CDC2/CDKX subfamily. As to quaternary structure, interacts with CYCH1-1. As to expression, expressed in actively dividing cells of roots, leaves and shoots. Expressed in the intercalary meristem and the elongation zone of internodes.

It is found in the nucleus. It catalyses the reaction L-seryl-[protein] + ATP = O-phospho-L-seryl-[protein] + ADP + H(+). It carries out the reaction L-threonyl-[protein] + ATP = O-phospho-L-threonyl-[protein] + ADP + H(+). The catalysed reaction is [DNA-directed RNA polymerase] + ATP = phospho-[DNA-directed RNA polymerase] + ADP + H(+). CDK-activating kinase that may control G1/S phase progression. May control the rate of cell differentiation to accomplish proper development of organs, or in response to a changing environment. Forms a complex with cyclin CYCH1-1 that phosphorylates CDKA-1 and the C-terminal domain (CTD) of the large subunit of RNA polymerase II. The chain is Cyclin-dependent kinase D-1 (CDKD-1) from Oryza sativa subsp. japonica (Rice).